Reading from the N-terminus, the 193-residue chain is dTTP/UTP pyrophosphatase (193 aa).

Residue aspartate 77 is the Proton acceptor of the active site.

This sequence belongs to the Maf family. YhdE subfamily. Requires a divalent metal cation as cofactor.

The protein localises to the cytoplasm. The enzyme catalyses dTTP + H2O = dTMP + diphosphate + H(+). The catalysed reaction is UTP + H2O = UMP + diphosphate + H(+). Functionally, nucleoside triphosphate pyrophosphatase that hydrolyzes dTTP and UTP. May have a dual role in cell division arrest and in preventing the incorporation of modified nucleotides into cellular nucleic acids. This is dTTP/UTP pyrophosphatase from Bacteroides fragilis (strain ATCC 25285 / DSM 2151 / CCUG 4856 / JCM 11019 / LMG 10263 / NCTC 9343 / Onslow / VPI 2553 / EN-2).